We begin with the raw amino-acid sequence, 86 residues long: UPF0297 protein CA_C1679 (86 aa).

This sequence belongs to the UPF0297 family.

The chain is UPF0297 protein CA_C1679 from Clostridium acetobutylicum (strain ATCC 824 / DSM 792 / JCM 1419 / IAM 19013 / LMG 5710 / NBRC 13948 / NRRL B-527 / VKM B-1787 / 2291 / W).